We begin with the raw amino-acid sequence, 451 residues long: Phosphoglucosamine mutase (451 aa).

Ser-102 functions as the Phosphoserine intermediate in the catalytic mechanism. Residues Ser-102, Asp-243, Asp-245, and Asp-247 each contribute to the Mg(2+) site. Ser-102 carries the post-translational modification Phosphoserine.

Belongs to the phosphohexose mutase family. It depends on Mg(2+) as a cofactor. Post-translationally, activated by phosphorylation.

It carries out the reaction alpha-D-glucosamine 1-phosphate = D-glucosamine 6-phosphate. Its function is as follows. Catalyzes the conversion of glucosamine-6-phosphate to glucosamine-1-phosphate. This Salinispora arenicola (strain CNS-205) protein is Phosphoglucosamine mutase.